Here is a 520-residue protein sequence, read N- to C-terminus: Ubiquitin carboxyl-terminal hydrolase 3 (520 aa).

The residue at position 1 (M1) is an N-acetylmethionine. The UBP-type zinc finger occupies 1–121 (MECPHLSSSV…QKVREHLQNL (121 aa)). Residues C3, H5, C29, C32, C41, C44, C49, H56, H60, H82, C95, and C98 each contribute to the Zn(2+) site. A USP domain is found at 159–511 (TGLRNLGNTC…KAYILFYVEH (353 aa)). Residue C168 is the Nucleophile of the active site. Catalysis depends on H471, which acts as the Proton acceptor.

It belongs to the peptidase C19 family. USP3 subfamily. As to quaternary structure, interacts (via UBP-type domain) with H2A; the interaction is less efficient than with monoubiquitinated H2A. In terms of tissue distribution, expressed in all tissues examined, with strongest expression in pancreas.

It is found in the nucleus. The protein localises to the cytoplasm. It catalyses the reaction Thiol-dependent hydrolysis of ester, thioester, amide, peptide and isopeptide bonds formed by the C-terminal Gly of ubiquitin (a 76-residue protein attached to proteins as an intracellular targeting signal).. Deubiquitinase that plays a role in several cellular processes including transcriptional regulation, cell cycle progression or innate immunity. In response to DNA damage, deubiquitinates monoubiquitinated target proteins such as histone H2A and H2AX and thereby counteracts RNF168- and RNF8-mediated ubiquitination. In turn, participates in the recruitment of DNA damage repair factors to DNA break sites. Required for proper progression through S phase and subsequent mitotic entry. Acts as a positive regulator of TP53 by deubiquitinating and stabilizing it to promote normal cell proliferation and transformation. Participates in establishing tolerance innate immune memory through non-transcriptional feedback. Mechanistically, negatively regulates TLR-induced NF-kappa-B signaling by targeting and removing the 'Lys-63'-linked polyubiquitin chains on MYD88. Negatively regulates the activation of type I interferon signaling by mediating 'Lys-63'-linked polyubiquitin chains on RIGI and IFIH1. Also deubiquinates ASC/PYCARD, the central adapter mediating the assembly and activation of most inflammasomes, and thereby promotes inflammasome activation. The chain is Ubiquitin carboxyl-terminal hydrolase 3 (USP3) from Homo sapiens (Human).